The chain runs to 58 residues: Small ribosomal subunit protein bS21 (58 aa).

This sequence belongs to the bacterial ribosomal protein bS21 family.

The chain is Small ribosomal subunit protein bS21 from Staphylococcus saprophyticus subsp. saprophyticus (strain ATCC 15305 / DSM 20229 / NCIMB 8711 / NCTC 7292 / S-41).